The following is a 1370-amino-acid chain: DNA-directed RNA polymerase subunit beta (1370 aa).

It belongs to the RNA polymerase beta chain family. The RNAP catalytic core consists of 2 alpha, 1 beta, 1 beta' and 1 omega subunit. When a sigma factor is associated with the core the holoenzyme is formed, which can initiate transcription.

The catalysed reaction is RNA(n) + a ribonucleoside 5'-triphosphate = RNA(n+1) + diphosphate. Functionally, DNA-dependent RNA polymerase catalyzes the transcription of DNA into RNA using the four ribonucleoside triphosphates as substrates. This Verminephrobacter eiseniae (strain EF01-2) protein is DNA-directed RNA polymerase subunit beta.